The sequence spans 889 residues: F-BAR domain only protein 1 (889 aa).

The F-BAR domain occupies 1–248 (MSYFGEHFWG…NIENVSVEML (248 aa)). A mediates membrane-binding region spans residues 1–275 (MSYFGEHFWG…LDFEAYSAAA (275 aa)). Residues 156 to 195 (TSQKEMDKAETKTKKAAESLRRSVEKYNSARADFEQKMLD) adopt a coiled-coil conformation. Residues 267–442 (DFEAYSAAAL…KNLFGPPLES (176 aa)) form a mediates interaction with the adaptor protein complex AP-2 region. The disordered stretch occupies residues 294–352 (LSRREREPEPPAAVDFLEPDSGTCPEVDEEGFTVRPDVTQNSTAEPSRFSSSDSDFDDE). Residues Ser-295, Ser-347, and Ser-372 each carry the phosphoserine modification. Positions 382-596 (ATAGSLILPP…SPLGSSAAST (215 aa)) are disordered. Residues 450–469 (TGSSSLGFTSSPSPFSSSSP) are compositionally biased toward low complexity. Over residues 496–511 (PGTPQSPPSCRAPPPE) the composition is skewed to pro residues. The residue at position 530 (Ser-530) is a Phosphoserine. The span at 580-596 (LSRSLSPSPLGSSAAST) shows a compositional bias: low complexity. The segment at 609–889 (HGVSRGPSPV…FATGMYLVSC (281 aa)) is mediates interaction with AGFG1, CALM, DAB2, EPS15, EPS15R, ITSN1 and clathrin. Phosphoserine is present on Ser-616. One can recognise an MHD domain in the interval 625 to 888 (ALPIATAFTE…RFATGMYLVS (264 aa)). The interval 826–849 (AGGSGRLSASWEPLSGPSTPSPVA) is disordered.

The protein belongs to the FCHO family. May oligomerize and form homotetramer. Interacts with AP2A2 and AP2B1; 2 subunits of the adaptor protein complex AP-2. Interacts with DAB2. Interacts with clathrin (CLTC or CLTCL1). Interacts with EPS15, EPS15R and ITSN1. Interacts with AGFG1 and CALM. May interact with ACVR1; linking this receptor to clathrin-mediated endocytosis. Predominantly expressed in lymphoid cells.

It localises to the membrane. Its subcellular location is the clathrin-coated pit. In terms of biological role, functions in an early step of clathrin-mediated endocytosis. Has both a membrane binding/bending activity and the ability to recruit proteins essential to the formation of functional clathrin-coated pits. May regulate Bmp signaling by regulating clathrin-mediated endocytosis of Bmp receptors. Involved in the regulation of T-cell poliferation and activation. Affects TCR clustering upon receptor triggering and modulates its internalisation, playing a role in TCR-dependent T-cell activation. This chain is F-BAR domain only protein 1, found in Homo sapiens (Human).